We begin with the raw amino-acid sequence, 986 residues long: Resact receptor (986 aa).

Residues 1 to 21 form the signal peptide; sequence MATTRLLFLLVVAVMITMVRS. The Extracellular portion of the chain corresponds to 22 to 507; sequence ATLHYNPTVI…GELCTNWGLY (486 aa). N-linked (GlcNAc...) asparagine glycosylation is found at Asn185, Asn361, and Asn410. A helical membrane pass occupies residues 508–528; the sequence is LGTLIPAFIIIFGGGLGYYIY. The Cytoplasmic segment spans residues 529–986; that stretch reads RKRAYEAALD…SHSCSALHSS (458 aa). The region spanning 568-836 is the Protein kinase domain; that stretch reads LSAISVISNA…PNIIEVRTML (269 aa).

The protein localises to the membrane. It catalyses the reaction GTP = 3',5'-cyclic GMP + diphosphate. Implicated as a cell-surface receptor on spermatozoa for 'resact' a chemotactic peptide, and on various other cells as a receptor for atrial natriuretic peptide. The polypeptide is Resact receptor (Arbacia punctulata (Punctuate sea urchin)).